A 434-amino-acid polypeptide reads, in one-letter code: Trigger factor (434 aa).

Residues 161–246 (KDIVTIDFKG…IHKVEEPQLP (86 aa)) form the PPIase FKBP-type domain.

It belongs to the FKBP-type PPIase family. Tig subfamily.

Its subcellular location is the cytoplasm. The catalysed reaction is [protein]-peptidylproline (omega=180) = [protein]-peptidylproline (omega=0). Involved in protein export. Acts as a chaperone by maintaining the newly synthesized protein in an open conformation. Functions as a peptidyl-prolyl cis-trans isomerase. This chain is Trigger factor, found in Marinobacter nauticus (strain ATCC 700491 / DSM 11845 / VT8) (Marinobacter aquaeolei).